Here is a 315-residue protein sequence, read N- to C-terminus: Acyl transferase (315 aa).

Residues serine 116, aspartate 213, and histidine 243 each act as charge relay system in the active site.

The protein belongs to the LuxD family.

The protein operates within lipid metabolism; fatty acid reduction for biolumincescence. Its function is as follows. Acyl transferase is part of the fatty acid reductase system required for aldehyde biosynthesis; it produces fatty acids for the luminescent reaction. This Photobacterium leiognathi protein is Acyl transferase.